The primary structure comprises 487 residues: Zinc finger and BTB domain-containing protein 32 (487 aa).

The BTB domain maps to cysteine 29–proline 87. Basic and acidic residues predominate over residues arginine 113–histidine 166. 2 disordered regions span residues arginine 113–lysine 208 and glutamine 308–arginine 371. Residues glutamine 308 to serine 320 show a composition bias toward polar residues. Residues proline 357 to arginine 369 are compositionally biased toward pro residues. 3 consecutive C2H2-type zinc fingers follow at residues tyrosine 373–histidine 395, phenylalanine 401–histidine 423, and tyrosine 428–histidine 450. The disordered stretch occupies residues serine 468–threonine 487.

It belongs to the krueppel C2H2-type zinc-finger protein family. Homodimer (via PTB domain). Interacts with the N-terminal of FANCC. Interacts with ZBTB16. Interacts with GATA3.

It localises to the nucleus. In terms of biological role, DNA-binding protein that binds to the to a 5'-TGTACAGTGT-3' core sequence. May function as a transcriptional transactivator and transcriptional repressor. Probably exerts its repressor effect by preventing GATA3 from binding to DNA. May play a role in regulating the differentiation and activation of helper T-cells. The sequence is that of Zinc finger and BTB domain-containing protein 32 (ZBTB32) from Pan troglodytes (Chimpanzee).